We begin with the raw amino-acid sequence, 273 residues long: Large ribosomal subunit protein uL2c (273 aa).

A compositionally biased stretch (polar residues) spans 1–31 (MAIHLSKTSSPSTRNGAVNSQVKSNSRNRLI). 2 disordered regions span residues 1–53 (MAIH…GHRG) and 222–273 (MNPV…RRSK).

The protein belongs to the universal ribosomal protein uL2 family. In terms of assembly, part of the 50S ribosomal subunit.

Its subcellular location is the plastid. It localises to the chloroplast. The sequence is that of Large ribosomal subunit protein uL2c (rpl2) from Pisum sativum (Garden pea).